The primary structure comprises 185 residues: Large ribosomal subunit protein bL25 (185 aa).

It belongs to the bacterial ribosomal protein bL25 family. CTC subfamily. In terms of assembly, part of the 50S ribosomal subunit; part of the 5S rRNA/L5/L18/L25 subcomplex. Contacts the 5S rRNA. Binds to the 5S rRNA independently of L5 and L18.

Its function is as follows. This is one of the proteins that binds to the 5S RNA in the ribosome where it forms part of the central protuberance. In Chlamydia abortus (strain DSM 27085 / S26/3) (Chlamydophila abortus), this protein is Large ribosomal subunit protein bL25.